The sequence spans 188 residues: UPF0461 protein C5orf24 (188 aa).

The segment covering 1–10 (MMHPVASSNP) has biased composition (polar residues). The segment at 1–20 (MMHPVASSNPAFCGPGKPSC) is disordered. Residue serine 37 is modified to Phosphoserine. Residue lysine 75 forms a Glycyl lysine isopeptide (Lys-Gly) (interchain with G-Cter in SUMO2) linkage. Residues 79–142 (KKKKNLNRSG…GYKVSPGRPP (64 aa)) form a disordered region. The segment covering 80 to 92 (KKKNLNRSGKRGR) has biased composition (basic residues). The span at 94–107 (SGTTKSAGYRTSTG) shows a compositional bias: polar residues. Phosphoserine is present on residues serine 121 and serine 180. Lysine 184 is covalently cross-linked (Glycyl lysine isopeptide (Lys-Gly) (interchain with G-Cter in SUMO2)).

The protein belongs to the UPF0461 family.

This chain is UPF0461 protein C5orf24 (C5orf24), found in Homo sapiens (Human).